A 143-amino-acid polypeptide reads, in one-letter code: D-aminoacyl-tRNA deacylase (143 aa).

A Gly-cisPro motif, important for rejection of L-amino acids motif is present at residues 135-136 (GP).

This sequence belongs to the DTD family. In terms of assembly, homodimer.

The protein localises to the cytoplasm. It catalyses the reaction glycyl-tRNA(Ala) + H2O = tRNA(Ala) + glycine + H(+). It carries out the reaction a D-aminoacyl-tRNA + H2O = a tRNA + a D-alpha-amino acid + H(+). Its function is as follows. An aminoacyl-tRNA editing enzyme that deacylates mischarged D-aminoacyl-tRNAs. Also deacylates mischarged glycyl-tRNA(Ala), protecting cells against glycine mischarging by AlaRS. Acts via tRNA-based rather than protein-based catalysis; rejects L-amino acids rather than detecting D-amino acids in the active site. By recycling D-aminoacyl-tRNA to D-amino acids and free tRNA molecules, this enzyme counteracts the toxicity associated with the formation of D-aminoacyl-tRNA entities in vivo and helps enforce protein L-homochirality. The chain is D-aminoacyl-tRNA deacylase from Mycolicibacterium smegmatis (strain ATCC 700084 / mc(2)155) (Mycobacterium smegmatis).